A 241-amino-acid polypeptide reads, in one-letter code: Peroxisomal membrane protein 11C (241 aa).

Residues 1 to 124 lie on the Cytoplasmic side of the membrane; that stretch reads MASLSGLASA…ARVLHVDSSR (124 aa). Residues 125 to 149 form a helical membrane-spanning segment; it reads WWTLSTTLWALSLLLGVARSLWMLL. Topologically, residues 150–211 are lumenal; it reads KLRQRLRSPT…GVLWAGRFPP (62 aa). Residues 212–227 traverse the membrane as a helical segment; sequence WLVGLMGTISSILSMY. Over 228-241 the chain is Cytoplasmic; sequence QAARAGGQAEATTP.

It belongs to the peroxin-11 family. As to quaternary structure, homodimer. Heterodimer with either PEX11A or PEX11B. Interacts with FIS1.

It localises to the peroxisome membrane. Functionally, promotes membrane protrusion and elongation on the peroxisomal surface. This chain is Peroxisomal membrane protein 11C (PEX11G), found in Homo sapiens (Human).